Reading from the N-terminus, the 821-residue chain is Frameshifted structural polyprotein (821 aa).

The tract at residues 1-106 (MNRGFFNMLG…KPKPGKRQRM (106 aa)) is disordered. Residues 38 to 49 (LASQIQQLTTAV) show a composition bias toward polar residues. Over residues 67-106 (PPPRQKKQAPKQPPKPKKPKTQEKKKKQPAKPKPGKRQRM) the composition is skewed to basic residues. The ribosome-binding stretch occupies residues 93–101 (KQPAKPKPG). The 151-residue stretch at 114-264 (RLFDVKNEDG…KTTPEGTEEW (151 aa)) folds into the Peptidase S3 domain. Catalysis depends on charge relay system residues His141, Asp163, and Ser215. The tract at residues 265 to 279 (SAAPLVTAMCLLGNV) is functions as an uncleaved signal peptide for the precursor of protein E3/E2. An N-linked (GlcNAc...) asparagine; by host glycan is attached at Asn278. Cysteines 283 and 289 form a disulfide. N-linked (GlcNAc...) asparagine; by host glycans are attached at residues Asn524 and Asn646. The chain crosses the membrane as a helical span at residues 696 to 716 (ILAVASATVAMMIGVTVAVLC). Residues Cys724, Cys744, and Cys745 are each lipidated (S-palmitoyl cysteine; by host). Transmembrane regions (helical) follow at residues 726–746 (TPYA…LCCV) and 764–784 (NSQP…IVLM).

The protein belongs to the alphavirus frameshifted structural polyprotein family. Homomultimer. Interacts with host karyopherin KPNA4; this interaction allows the nuclear import of the viral capsid protein. Interacts with spike glycoprotein E2. Interacts with host IRAK1; the interaction leads to inhibition of IRAK1-dependent signaling. As to quaternary structure, the precursor of protein E3/E2 and E1 form a heterodimer shortly after synthesis. In terms of assembly, processing of the precursor of protein E3/E2 into E2 and E3 results in a heterodimer of the spike glycoproteins E2 and E1. Spike at virion surface are constituted of three E2-E1 heterodimers. Specific enzymatic cleavages in vivo yield mature proteins. Capsid protein is auto-cleaved during polyprotein translation, unmasking a signal peptide at the N-terminus of the precursor of E3/E2. The remaining polyprotein is then targeted to the host endoplasmic reticulum, where host signal peptidase cleaves it into pE2 and TF. pE2 is further processed to mature E3 and E2 by host furin in trans-Golgi vesicle. In terms of processing, palmitoylated via thioester bonds. These palmitoylations may induce disruption of the C-terminus transmembrane. This would result in the reorientation of E2 C-terminus from lumenal to cytoplasmic side. Post-translationally, palmitoylated via thioester bonds.

The protein localises to the virion. It localises to the host cytoplasm. Its subcellular location is the host cell membrane. The protein resides in the host nucleus. It is found in the virion membrane. The enzyme catalyses Autocatalytic release of the core protein from the N-terminus of the togavirus structural polyprotein by hydrolysis of a -Trp-|-Ser- bond.. In terms of biological role, forms an icosahedral capsid with a T=4 symmetry composed of 240 copies of the capsid protein surrounded by a lipid membrane through which penetrate 80 spikes composed of trimers of E1-E2 heterodimers. The capsid protein binds to the viral RNA genome at a site adjacent to a ribosome binding site for viral genome translation following genome release. Possesses a protease activity that results in its autocatalytic cleavage from the nascent structural protein. Following its self-cleavage, the capsid protein transiently associates with ribosomes, and within several minutes the protein binds to viral RNA and rapidly assembles into icosahedric core particles. The resulting nucleocapsid eventually associates with the cytoplasmic domain of the spike glycoprotein E2 at the cell membrane, leading to budding and formation of mature virions. In case of infection, new virions attach to target cells and after clathrin-mediated endocytosis their membrane fuses with the host endosomal membrane. This leads to the release of the nucleocapsid into the cytoplasm, followed by an uncoating event necessary for the genomic RNA to become accessible. The uncoating might be triggered by the interaction of capsid proteins with ribosomes. Binding of ribosomes would release the genomic RNA since the same region is genomic RNA-binding and ribosome-binding. Specifically inhibits interleukin-1 receptor-associated kinase 1/IRAK1-dependent signaling during viral entry, representing a means by which the alphaviruses may evade innate immune detection and activation prior to viral gene expression. Provides the signal sequence for the translocation of the precursor of protein E3/E2 to the host endoplasmic reticulum. Furin-cleaved E3 remains associated with spike glycoprotein E1 and mediates pH protection of the latter during the transport via the secretory pathway. After virion release from the host cell, the assembly protein E3 is gradually released in the extracellular space. Its function is as follows. Plays an essential role in viral attachment to target host cell, by binding to the cell receptor. Synthesized as a pE2 precursor which is processed by furin at the cell membrane just before virion budding, giving rise to E2-E1 heterodimer. The pE2-E1 heterodimer is stable, whereas E2-E1 is unstable and dissociate at low pH. pE2 is processed at the last step, presumably to avoid E1 fusion activation before its final export to cell surface. E2 C-terminus contains a transitory transmembrane that would be disrupted by palmitoylation, resulting in reorientation of the C-terminal tail from lumenal to cytoplasmic side. This step is critical since E2 C-terminus is involved in budding by interacting with capsid proteins. This release of E2 C-terminus in cytoplasm occurs lately in protein export, and precludes premature assembly of particles at the endoplasmic reticulum membrane. Functionally, plays a role in viral assembly and release. The chain is Frameshifted structural polyprotein from Sindbis virus (SINV).